The following is a 203-amino-acid chain: UPF0301 protein Sde_3637 (203 aa).

Belongs to the UPF0301 (AlgH) family.

This Saccharophagus degradans (strain 2-40 / ATCC 43961 / DSM 17024) protein is UPF0301 protein Sde_3637.